Consider the following 302-residue polypeptide: tRNA-cytidine(32) 2-sulfurtransferase (302 aa).

Positions 45-50 match the PP-loop motif motif; sequence SGGKDS. C120, C123, and C211 together coordinate [4Fe-4S] cluster.

It belongs to the TtcA family. In terms of assembly, homodimer. Requires Mg(2+) as cofactor. [4Fe-4S] cluster serves as cofactor.

Its subcellular location is the cytoplasm. The catalysed reaction is cytidine(32) in tRNA + S-sulfanyl-L-cysteinyl-[cysteine desulfurase] + AH2 + ATP = 2-thiocytidine(32) in tRNA + L-cysteinyl-[cysteine desulfurase] + A + AMP + diphosphate + H(+). It participates in tRNA modification. Functionally, catalyzes the ATP-dependent 2-thiolation of cytidine in position 32 of tRNA, to form 2-thiocytidine (s(2)C32). The sulfur atoms are provided by the cysteine/cysteine desulfurase (IscS) system. This is tRNA-cytidine(32) 2-sulfurtransferase from Cellvibrio japonicus (strain Ueda107) (Pseudomonas fluorescens subsp. cellulosa).